The following is a 102-amino-acid chain: MQKARIKLSSTQHTELDGVCNQIKAIAEKTGVDMAGPIPLPTKALKVTTRKSTDGEGSSSFDRWTMRVHKRVIDIEADERTMKHIMKVRIPDTVQIEIELRN.

Belongs to the universal ribosomal protein uS10 family. In terms of assembly, part of the 30S ribosomal subunit.

Its function is as follows. Involved in the binding of tRNA to the ribosomes. The chain is Small ribosomal subunit protein uS10 from Methanococcus maripaludis (strain C5 / ATCC BAA-1333).